The following is a 395-amino-acid chain: Acetylornithine aminotransferase (395 aa).

Residues 117–118 (GA) and Phe144 contribute to the pyridoxal 5'-phosphate site. Residue Arg147 participates in N(2)-acetyl-L-ornithine binding. Position 230 to 233 (230 to 233 (DEVQ)) interacts with pyridoxal 5'-phosphate. At Lys259 the chain carries N6-(pyridoxal phosphate)lysine. Position 285 (Ser285) interacts with N(2)-acetyl-L-ornithine. Thr286 lines the pyridoxal 5'-phosphate pocket.

Belongs to the class-III pyridoxal-phosphate-dependent aminotransferase family. ArgD subfamily. As to quaternary structure, homodimer. Pyridoxal 5'-phosphate is required as a cofactor.

It localises to the cytoplasm. It catalyses the reaction N(2)-acetyl-L-ornithine + 2-oxoglutarate = N-acetyl-L-glutamate 5-semialdehyde + L-glutamate. It participates in amino-acid biosynthesis; L-arginine biosynthesis; N(2)-acetyl-L-ornithine from L-glutamate: step 4/4. The protein is Acetylornithine aminotransferase of Methanosarcina mazei (strain ATCC BAA-159 / DSM 3647 / Goe1 / Go1 / JCM 11833 / OCM 88) (Methanosarcina frisia).